We begin with the raw amino-acid sequence, 140 residues long: MAPLLLVLWASLVSMELTGGMMVNEVPAQNLSCFECFKVLQASKCHPIECRPNEKVCVSNEVLLYTSTKRRTQISKRCATACPNSNNVIEWSLGNTQARITRRCCSGDRCNRAPGSWEGFWSLPGRLLLPMGLGLFCTLL.

Residues 1–20 (MAPLLLVLWASLVSMELTGG) form the signal peptide. A UPAR/Ly6 domain is found at 31-124 (LSCFECFKVL…GSWEGFWSLP (94 aa)). Cystine bridges form between Cys-33/Cys-50 and Cys-105/Cys-110. A lipid anchor (GPI-anchor amidated serine) is attached at Ser-116. Residues 117 to 140 (WEGFWSLPGRLLLPMGLGLFCTLL) constitute a propeptide, removed in mature form.

The protein resides in the cell membrane. This is Lymphocyte antigen 6L from Mus musculus (Mouse).